The following is a 617-amino-acid chain: Probable endochitinase (617 aa).

One can recognise a GH18 domain in the interval 53-426 (YIRPCYFTNW…SVIAKELGGV (374 aa)). Cys-57 and Cys-82 are disulfide-bonded. Chitin-binding positions include 109–110 (DW) and 136–139 (GGWS). Glu-179 serves as the catalytic Proton donor. Chitin contacts are provided by residues Tyr-180 and 245–248 (MSYD). Asn-310 carries N-linked (GlcNAc...) asparagine glycosylation. Trp-394 contacts chitin. 2 Chitin-binding type-2 domains span residues 478–534 (TNVC…GCSV) and 563–617 (AFKC…KCAK). Disulfide bonds link Cys-511-Cys-524 and Cys-594-Cys-607.

It belongs to the glycosyl hydrolase 18 family. Chitinase class II subfamily.

It catalyses the reaction Random endo-hydrolysis of N-acetyl-beta-D-glucosaminide (1-&gt;4)-beta-linkages in chitin and chitodextrins.. This chain is Probable endochitinase (cht-1), found in Caenorhabditis elegans.